The primary structure comprises 316 residues: N-acetyl-gamma-glutamyl-phosphate reductase (316 aa).

The active site involves C136.

This sequence belongs to the NAGSA dehydrogenase family. Type 1 subfamily.

The protein localises to the cytoplasm. The catalysed reaction is N-acetyl-L-glutamate 5-semialdehyde + phosphate + NADP(+) = N-acetyl-L-glutamyl 5-phosphate + NADPH + H(+). It participates in amino-acid biosynthesis; L-arginine biosynthesis; N(2)-acetyl-L-ornithine from L-glutamate: step 3/4. Its function is as follows. Catalyzes the NADPH-dependent reduction of N-acetyl-5-glutamyl phosphate to yield N-acetyl-L-glutamate 5-semialdehyde. This chain is N-acetyl-gamma-glutamyl-phosphate reductase, found in Xanthomonas campestris pv. campestris (strain 8004).